The primary structure comprises 117 residues: MIKAAVTKESLYRMNTLMEAFQGFLGLDLGEFTFKVKPGVFLLTDVKSYLIGDKYDDAFNALIDFVLRNDRDAVEGTETDVSIRLGLSPSDMVVKRQDKTFTFTHGDLEFEVHWINL.

The polypeptide is Putative gene 49 protein (49) (Bacillus subtilis (Bacteriophage SP01)).